Here is a 121-residue protein sequence, read N- to C-terminus: Large ribosomal subunit protein uL18 (121 aa).

The protein belongs to the universal ribosomal protein uL18 family. As to quaternary structure, part of the 50S ribosomal subunit; part of the 5S rRNA/L5/L18/L25 subcomplex. Contacts the 5S and 23S rRNAs.

Its function is as follows. This is one of the proteins that bind and probably mediate the attachment of the 5S RNA into the large ribosomal subunit, where it forms part of the central protuberance. The polypeptide is Large ribosomal subunit protein uL18 (Streptococcus equi subsp. zooepidemicus (strain MGCS10565)).